The sequence spans 54 residues: Ferredoxin (54 aa).

2 4Fe-4S ferredoxin-type domains span residues 2 to 28 and 29 to 54; these read HVISDECVKCGACASTCPTGAIEEGET and KYVVTDSCIDCGACEAVCPTGAISAE. [4Fe-4S] cluster contacts are provided by Cys-8, Cys-11, Cys-14, Cys-18, Cys-36, Cys-39, Cys-42, and Cys-46.

The cofactor is [4Fe-4S] cluster.

Functionally, ferredoxins are iron-sulfur proteins that transfer electrons in a wide variety of metabolic reactions. The polypeptide is Ferredoxin (Megasphaera elsdenii).